The following is a 204-amino-acid chain: Ribosomal RNA small subunit methyltransferase G (204 aa).

The S-adenosyl-L-methionine site is built by Gly73, Phe78, and Arg139.

Belongs to the methyltransferase superfamily. RNA methyltransferase RsmG family.

The protein resides in the cytoplasm. The catalysed reaction is guanosine(527) in 16S rRNA + S-adenosyl-L-methionine = N(7)-methylguanosine(527) in 16S rRNA + S-adenosyl-L-homocysteine. In terms of biological role, specifically methylates the N7 position of guanine in position 527 of 16S rRNA. The polypeptide is Ribosomal RNA small subunit methyltransferase G (Coxiella burnetii (strain CbuG_Q212) (Coxiella burnetii (strain Q212))).